The sequence spans 375 residues: Carboxypeptidase O (375 aa).

The first 20 residues, methionine 1 to glycine 20, serve as a signal peptide directing secretion. Positions arginine 50–valine 345 constitute a Peptidase M14 domain. Histidine 109 and glutamate 112 together coordinate Zn(2+). Asparagine 175 is a glycosylation site (N-linked (GlcNAc...) asparagine). Histidine 237 serves as a coordination point for Zn(2+). Asparagine 252 carries an N-linked (GlcNAc...) asparagine glycan. Glutamate 311 (proton donor/acceptor) is an active-site residue. Residue asparagine 315 is glycosylated (N-linked (GlcNAc...) asparagine). Residue serine 354 is the site of GPI-anchor amidated serine attachment. The propeptide at alanine 355 to leucine 375 is removed in mature form.

This sequence belongs to the peptidase M14 family. Zn(2+) is required as a cofactor.

The protein resides in the apical cell membrane. Functionally, carboxypeptidase which preferentially cleaves C-terminal acidic residues from peptides and proteins. Can also cleave C-terminal hydrophobic amino acids, with a preference for small residues over large residues. The sequence is that of Carboxypeptidase O from Bos taurus (Bovine).